The following is a 167-amino-acid chain: Large ribosomal subunit protein uL10 (167 aa).

Belongs to the universal ribosomal protein uL10 family. Part of the ribosomal stalk of the 50S ribosomal subunit. The N-terminus interacts with L11 and the large rRNA to form the base of the stalk. The C-terminus forms an elongated spine to which L12 dimers bind in a sequential fashion forming a multimeric L10(L12)X complex.

In terms of biological role, forms part of the ribosomal stalk, playing a central role in the interaction of the ribosome with GTP-bound translation factors. The chain is Large ribosomal subunit protein uL10 from Streptococcus mutans serotype c (strain ATCC 700610 / UA159).